Consider the following 319-residue polypeptide: Acetyl esterase (319 aa).

Positions 91 to 93 (HGG) match the Involved in the stabilization of the negatively charged intermediate by the formation of the oxyanion hole motif. Catalysis depends on residues Ser165, Asp262, and His292.

It belongs to the 'GDXG' lipolytic enzyme family. As to quaternary structure, homodimer. Interacts with MalT and MelA.

The protein localises to the cytoplasm. Functionally, displays esterase activity towards short chain fatty esters (acyl chain length of up to 8 carbons). Able to hydrolyze triacetylglycerol (triacetin) and tributyrylglycerol (tributyrin), but not trioleylglycerol (triolein) or cholesterol oleate. Negatively regulates MalT activity by antagonizing maltotriose binding. Inhibits MelA galactosidase activity. The sequence is that of Acetyl esterase from Shigella flexneri.